Here is a 211-residue protein sequence, read N- to C-terminus: BAG family molecular chaperone regulator 2 (211 aa).

Ala-2 carries the N-acetylalanine modification. 3 positions are modified to phosphoserine: Ser-20, Ser-31, and Ser-73. The stretch at 20-61 (SMADRSSRLLESLDQLELRVEALREAATAVEQEKEILLEMIH) forms a coiled coil. Positions 109–189 (SLKHATRIID…NIENSDKAIK (81 aa)) constitute a BAG domain.

As to quaternary structure, binds to the ATPase domain of HSP/HSC70 chaperones. May interact with NWD1. Interacts with HSPA1A (via NBD), HSPA1B (via NBD) and HSPA8. May interact with DNJC9; the interaction seems to be histone-dependent.

Its function is as follows. Co-chaperone for HSP70 and HSC70 chaperone proteins. Acts as a nucleotide-exchange factor (NEF) promoting the release of ADP from the HSP70 and HSC70 proteins thereby triggering client/substrate protein release. The polypeptide is BAG family molecular chaperone regulator 2 (BAG2) (Homo sapiens (Human)).